A 178-amino-acid chain; its full sequence is Dual-action ribosomal maturation protein DarP (178 aa).

Belongs to the DarP family.

It localises to the cytoplasm. In terms of biological role, member of a network of 50S ribosomal subunit biogenesis factors which assembles along the 30S-50S interface, preventing incorrect 23S rRNA structures from forming. Promotes peptidyl transferase center (PTC) maturation. In Mannheimia succiniciproducens (strain KCTC 0769BP / MBEL55E), this protein is Dual-action ribosomal maturation protein DarP.